The chain runs to 231 residues: Ribonuclease P protein component 3 (231 aa).

This sequence belongs to the eukaryotic/archaeal RNase P protein component 3 family. Consists of a catalytic RNA component and at least 4-5 protein subunits.

Its subcellular location is the cytoplasm. The enzyme catalyses Endonucleolytic cleavage of RNA, removing 5'-extranucleotides from tRNA precursor.. In terms of biological role, part of ribonuclease P, a protein complex that generates mature tRNA molecules by cleaving their 5'-ends. The chain is Ribonuclease P protein component 3 from Methanococcus maripaludis (strain C5 / ATCC BAA-1333).